A 373-amino-acid chain; its full sequence is LIM domain-binding protein 2 (373 aa).

Disordered regions lie at residues 244–287 (APPA…KTPA) and 327–373 (QYDA…QASQ). A compositionally biased stretch (low complexity) spans 263–280 (STSSTSNSSAGNTTNSAG). In terms of domain architecture, LIM interaction domain (LID) spans 298–337 (DVMVVGEPTLMGGEFGDEDERLITRLENTQYDAANGMDDE). The span at 341 to 373 (NNSPALGNNSPWNSKPPATQETKSENAPPQASQ) shows a compositional bias: polar residues.

The protein belongs to the LDB family. In terms of assembly, interacts with LHX9. Interacts with SLK; leading to negatively regulate SLK kinase activity. Interacts with LMO4. Interacts with PITX1. Interacts with LHX3. Post-translationally, ubiquitinated by RLIM/RNF12, leading to its degradation by the proteasome. In terms of tissue distribution, expressed in multiple tissues including heart, brain, liver, kidney, testis, lung and muscle, with expression highest in the brain, trigeminal ganglia, and lung.

It localises to the nucleus. Transcription cofactor. Binds to the LIM domain of a wide variety of LIM domain-containing transcription factors. Functionally, regulates the transcriptional activity of LIM-containing proteins such as LHX3 or PITX1. The chain is LIM domain-binding protein 2 (Ldb2) from Mus musculus (Mouse).